The chain runs to 340 residues: MILSIESSCDDSSLALTRIKDAQLIAHFKISQEKHHSSYGGVVPELASRLHAENLPLLLERIKISLNKDFSKIKAIAITNQPGLSVTLIEGLMMAKALSLSLNLPLILEDHLRGHVYSLFINEKQTCMPLSVLLVSGGHSLILEARDYENIKIVATSLDDSFGESFDKVSKMLDLGYPGGPIVEKLALDYRHPNEPLMFPVPLKNSPNLAFSFSGLKNAVRLEVEKNAPNLNDEVKQKIGYHFQSAAIEHLIQQTKRYFKTKRPKIFGIVGGASQNLALRKAFENLCDAFDCKLVLAPLEFCSDNAAMIGRSSLEAYQKKRFVPLEKANISPRTLLKSFE.

Positions 111 and 115 each coordinate Fe cation. Residues 134–138 (LVSGG), D167, G180, and N276 contribute to the substrate site. D304 is a Fe cation binding site.

The protein belongs to the KAE1 / TsaD family. It depends on Fe(2+) as a cofactor.

It is found in the cytoplasm. It catalyses the reaction L-threonylcarbamoyladenylate + adenosine(37) in tRNA = N(6)-L-threonylcarbamoyladenosine(37) in tRNA + AMP + H(+). Required for the formation of a threonylcarbamoyl group on adenosine at position 37 (t(6)A37) in tRNAs that read codons beginning with adenine. Is involved in the transfer of the threonylcarbamoyl moiety of threonylcarbamoyl-AMP (TC-AMP) to the N6 group of A37, together with TsaE and TsaB. TsaD likely plays a direct catalytic role in this reaction. The sequence is that of tRNA N6-adenosine threonylcarbamoyltransferase from Helicobacter pylori (strain P12).